The following is a 308-amino-acid chain: D-alanine--D-alanine ligase (308 aa).

In terms of domain architecture, ATP-grasp spans 102–302; that stretch reads KKVAAAAGVA…FGELLSWMVE (201 aa). 128–183 lines the ATP pocket; the sequence is PMEPPYVVKPVREGSSFGVVIVKEDQTHPPQIISSAEWNYGAEVLVEKYIPGRELT. Mg(2+) is bound by residues Asp252, Glu269, and Asn271.

The protein belongs to the D-alanine--D-alanine ligase family. The cofactor is Mg(2+). Mn(2+) serves as cofactor.

The protein resides in the cytoplasm. The catalysed reaction is 2 D-alanine + ATP = D-alanyl-D-alanine + ADP + phosphate + H(+). It participates in cell wall biogenesis; peptidoglycan biosynthesis. Cell wall formation. The sequence is that of D-alanine--D-alanine ligase from Brucella anthropi (strain ATCC 49188 / DSM 6882 / CCUG 24695 / JCM 21032 / LMG 3331 / NBRC 15819 / NCTC 12168 / Alc 37) (Ochrobactrum anthropi).